The following is a 131-amino-acid chain: Acanthoscurrin-2 (131 aa).

Lysine 130 is subject to Lysine amide.

In terms of tissue distribution, expressed in hemocytes and secreted into the plasma following bacterial immune challenge.

The protein localises to the secreted. In terms of biological role, antimicrobial protein. Strong activity against the Gram-negative bacterium E.coli SBS363 and yeast C.albicans. No detectable activity against the Gram-positive bacterium M.luteus. In Acanthoscurria gomesiana (Tarantula spider), this protein is Acanthoscurrin-2.